Reading from the N-terminus, the 151-residue chain is Mini-ribonuclease 3 (151 aa).

The active site involves Asp-28.

It belongs to the MrnC RNase family. As to quaternary structure, homodimer. Mg(2+) is required as a cofactor.

It is found in the cytoplasm. In terms of biological role, involved in correct processing of both the 5' and 3' ends of 23S rRNA precursor. Processes 30S rRNA precursor transcript even in absence of ribonuclease 3 (Rnc); Rnc processes 30S rRNA into smaller rRNA precursors. The sequence is that of Mini-ribonuclease 3 from Clostridium tetani (strain Massachusetts / E88).